A 398-amino-acid polypeptide reads, in one-letter code: Cystathionine gamma-lyase (398 aa).

S50 bears the Phosphoserine mark. 3 residues coordinate substrate: R61, Y113, and R118. N6-(pyridoxal phosphate)lysine is present on K211. E338 is a binding site for substrate.

Belongs to the trans-sulfuration enzymes family. As to quaternary structure, homotetramer. Interacts with CALM in a calcium-dependent manner. Pyridoxal 5'-phosphate serves as cofactor.

The protein resides in the cytoplasm. The enzyme catalyses L,L-cystathionine + H2O = 2-oxobutanoate + L-cysteine + NH4(+). It carries out the reaction L-homoserine = 2-oxobutanoate + NH4(+). It catalyses the reaction L-selenocystathionine + H2O = L-selenocysteine + 2-oxobutanoate + NH4(+). The catalysed reaction is L-cysteine + H2O = hydrogen sulfide + pyruvate + NH4(+) + H(+). The enzyme catalyses L-homocysteine + H2O = 2-oxobutanoate + hydrogen sulfide + NH4(+) + H(+). It participates in amino-acid biosynthesis; L-cysteine biosynthesis; L-cysteine from L-homocysteine and L-serine: step 2/2. Catalyzes the last step in the trans-sulfuration pathway from L-methionine to L-cysteine in a pyridoxal-5'-phosphate (PLP)-dependent manner, which consists on cleaving the L,L-cystathionine molecule into L-cysteine, ammonia and 2-oxobutanoate. Part of the L-cysteine derived from the trans-sulfuration pathway is utilized for biosynthesis of the ubiquitous antioxidant glutathione. Besides its role in the conversion of L-cystathionine into L-cysteine, it utilizes L-cysteine and L-homocysteine as substrates (at much lower rates than L,L-cystathionine) to produce hydrogen sulfide (H2S). In vitro, it converts two L-cysteine molecules into lanthionine and H2S, and two L-homocysteine molecules to homolanthionine and H2S, which can be particularly relevant under conditions of severe hyperhomocysteinemia. Lanthionine and homolanthionine are structural homologs of L,L-cystathionine that differ by the absence or presence of an extra methylene group, respectively. Acts as a cysteine-protein sulfhydrase by mediating sulfhydration of target proteins: sulfhydration consists of converting -SH groups into -SSH on specific cysteine residues of target proteins such as GAPDH, PTPN1 and NF-kappa-B subunit RELA, thereby regulating their function. By generating the gasotransmitter H2S, it participates in a number of physiological processes such as vasodilation, bone protection, and inflammation. Plays an essential role in myogenesis by contributing to the biogenesis of H2S in skeletal muscle tissue. Can also accept homoserine as substrate. Catalyzes the elimination of selenocystathionine (which can be derived from the diet) to yield selenocysteine, ammonia and 2-oxobutanoate. In Rattus norvegicus (Rat), this protein is Cystathionine gamma-lyase (Cth).